The sequence spans 543 residues: Peptide chain release factor 3 (543 aa).

The tr-type G domain occupies 21-289; that stretch reads KKRRTFAIIS…ALSDWAPSPL (269 aa). Residues 30-37, 98-102, and 152-155 contribute to the GTP site; these read SHPDAGKT, DTPGH, and NKLD.

The protein belongs to the TRAFAC class translation factor GTPase superfamily. Classic translation factor GTPase family. PrfC subfamily.

Its subcellular location is the cytoplasm. In terms of biological role, increases the formation of ribosomal termination complexes and stimulates activities of RF-1 and RF-2. It binds guanine nucleotides and has strong preference for UGA stop codons. It may interact directly with the ribosome. The stimulation of RF-1 and RF-2 is significantly reduced by GTP and GDP, but not by GMP. The chain is Peptide chain release factor 3 from Thiobacillus denitrificans (strain ATCC 25259 / T1).